Reading from the N-terminus, the 584-residue chain is Proteasome-associated ATPase (584 aa).

A coiled-coil region spans residues 16–91; the sequence is EELASQVRLL…KEEVDRLAQP (76 aa). 273–278 is an ATP binding site; it reads GCGKTL. Residues 583-584 form a docks into pockets in the proteasome alpha-ring region; sequence YL.

Belongs to the AAA ATPase family. As to quaternary structure, homohexamer. Assembles into a hexameric ring structure that caps the 20S proteasome core. Strongly interacts with the prokaryotic ubiquitin-like protein Pup through a hydrophobic interface; the interacting region of ARC lies in its N-terminal coiled-coil domain. There is one Pup binding site per ARC hexamer ring. Upon ATP-binding, the C-terminus of ARC interacts with the alpha-rings of the proteasome core, possibly by binding to the intersubunit pockets.

The protein operates within protein degradation; proteasomal Pup-dependent pathway. Its function is as follows. ATPase which is responsible for recognizing, binding, unfolding and translocation of pupylated proteins into the bacterial 20S proteasome core particle. May be essential for opening the gate of the 20S proteasome via an interaction with its C-terminus, thereby allowing substrate entry and access to the site of proteolysis. Thus, the C-termini of the proteasomal ATPase may function like a 'key in a lock' to induce gate opening and therefore regulate proteolysis. The sequence is that of Proteasome-associated ATPase from Nocardioides sp. (strain ATCC BAA-499 / JS614).